Consider the following 329-residue polypeptide: Cytosolic arginine sensor for mTORC1 subunit 1 (329 aa).

Residue Ser14 is modified to Phosphoserine. ACT domains are found at residues 72 to 138 (AEAT…HTLA) and 260 to 321 (GELW…EVLQ). L-arginine-binding positions include 111 to 112 (SV), Gly274, 280 to 281 (IV), and 300 to 304 (TFNFD).

Belongs to the GATS family. In terms of assembly, forms homodimers and heterodimers with CASTOR2. Interacts with the GATOR2 complex which is composed of MIOS, SEC13, SEH1L, WDR24 and WDR59; the interaction is negatively regulated by arginine. Interacts with TM4SF5; the interaction is positively regulated by leucine and is negatively regulated by arginine. In terms of processing, phosphorylation at Ser-14 by AKT1, promoting the interaction between CASTOR1 and RNF167. Ubiquitinated by RNF167 via 'Lys-29'-polyubiquitination, leading to its degradation, releasing the GATOR2 complex. Ubiquitination by RNF167 is promoted by phosphorylation at Ser-14 by AKT1.

Its subcellular location is the cytoplasm. It is found in the cytosol. Its function is as follows. Functions as an intracellular arginine sensor within the amino acid-sensing branch of the TORC1 signaling pathway. As a homodimer or a heterodimer with CASTOR2, binds and inhibits the GATOR subcomplex GATOR2 and thereby mTORC1. Binding of arginine to CASTOR1 allosterically disrupts the interaction of CASTOR1-containing dimers with GATOR2 which can in turn activate mTORC1 and the TORC1 signaling pathway. This is Cytosolic arginine sensor for mTORC1 subunit 1 from Pongo abelii (Sumatran orangutan).